We begin with the raw amino-acid sequence, 81 residues long: MSSRYLAAVDDYLHHPSPRYQAHVDLRRELRAYADEERREAARAIAHPERPLLPPPATQAAPPQPSTREAAHPSAPTAASS.

The segment at 3 to 36 is active domain; it reads SRYLAAVDDYLHHPSPRYQAHVDLRRELRAYADE. Over residues 37–50 the composition is skewed to basic and acidic residues; that stretch reads ERREAARAIAHPER. Residues 37 to 81 form a disordered region; the sequence is ERREAARAIAHPERPLLPPPATQAAPPQPSTREAAHPSAPTAASS. Over residues 51–65 the composition is skewed to pro residues; it reads PLLPPPATQAAPPQP. Residues 72-81 show a composition bias toward low complexity; that stretch reads HPSAPTAASS.

This sequence belongs to the herpesviridae US12 family. Interacts with host TAP1 and TAP2; these interactions inhibit the loading of peptides onto MHC class I molecules.

Its subcellular location is the host cytoplasm. The protein resides in the host nucleus. Functionally, plays a role in the inhibition of host immune response. Binds specifically to transporters associated with antigen processing (TAP), thereby blocking peptide-binding and translocation by TAP as well as subsequent loading of peptides onto MHC class I molecules. Empty MHC I molecules are retained in the endoplasmic reticulum and ultimately directed to proteasomal degradation. In consequence, infected cells are masked for immune recognition by cytotoxic T-lymphocytes. The protein is ICP47 protein (US12) of Cercopithecine herpesvirus 1 (strain E2490) (CeHV-1).